The chain runs to 261 residues: Thioesterase AMT4 (261 aa).

It belongs to the AMT4 thioesterase family.

It functions in the pathway mycotoxin biosynthesis. Its function is as follows. Thioesterase; part of the gene clusters that mediate the biosynthesis of AM-toxins, host-selective toxins (HSTs) causing Alternaria blotch on apple, a worldwide distributed disease. AM-toxins are cyclic depsipeptides containing the 3 residues 2-hydroxy-isovaleric acid (2-HIV), dehydroalanine, L-alanine which are common for all 3 AM-toxins I to III. The fourth precursor is L-alpha-amino-methoxyphenyl-valeric acid (L-Amv) for AM-toxin I, L-alpha-amino-phenyl-valeric acid (L-Apv) for AM-toxin II, and L-alpha-amino-hydroxyphenyl-valeric acid (L-Ahv) for AM-toxin III. AM-toxins have two target sites for affecting susceptible apple cells; they cause invagination of the plasma membrane and electrolyte loss and chloroplast disorganization. The non-ribosomal peptide synthetase AMT1 contains 4 catalytic modules and is responsible for activation of each residue in AM-toxin. The aldo-keto reductase AMT2 catalyzes the conversion of 2-keto-isovaleric acid (2-KIV) to 2-hydroxy-isovaleric acid (2-HIV), one of the precursor residues incorporated by AMT1 during AM-toxin biosynthesis, by reduction of its ketone to an alcohol. The cytochrome P450 monooxygenase AMT3 and the thioesterase AMT4 are also important for AM-toxin production, but their exact function within the AM-toxin biosynthesis are not known yet. Up to 21 proteins (including AMT1 to AMT4) are predicted to be involved in AM-toxin biosynthesis since their expression ishighly up-regulated in AM-toxin-producing cultures. The sequence is that of Thioesterase AMT4 from Alternaria alternata (Alternaria rot fungus).